Consider the following 197-residue polypeptide: Syndecan-4 (197 aa).

The N-terminal stretch at 1-19 is a signal peptide; the sequence is MPLPRAAFLLGLLLAAAAA. Residues 20-147 lie on the Extracellular side of the membrane; sequence ESVRETETMD…SIFERTEVLT (128 aa). Residues Ser38, Ser65, and Ser67 are each glycosylated (O-linked (Xyl...) (glycosaminoglycan) serine). N-linked (GlcNAc...) asparagine glycosylation is found at Asn124 and Asn136. The helical transmembrane segment at 148 to 168 threads the bilayer; sequence ALIAGGAVGLLFAVFLILLLV. Over 169 to 197 the chain is Cytoplasmic; the sequence is YRMKKKDEGSYDLGKKPIYKKAPTNEFYA.

It belongs to the syndecan proteoglycan family. Interacts with SDOS. O-glycosylated; contains both chondroitin sulfate and heparan sulfate. Ser-38, Ser-65 and Ser-67 can all be modified by either chondroitin sulfate or heparan sulfate, and the protein exists in forms that contain only chondroitin sulfate, only heparan sulfate and both chondroitin sulfate and heparan sulfate.

The protein localises to the membrane. Cell surface proteoglycan which regulates exosome biogenesis in concert with SDCBP and PDCD6IP. In Gallus gallus (Chicken), this protein is Syndecan-4 (SDC4).